The following is a 662-amino-acid chain: Acetyl-coenzyme A synthetase (662 aa).

Residues 197 to 200 (RKGK) and Thr-317 each bind CoA. ATP contacts are provided by residues 393–395 (GEP), 417–422 (DTWWQT), Asp-510, and Arg-525. Residue Ser-533 participates in CoA binding. An ATP-binding site is contributed by Arg-536. Residues His-549 and Val-552 each contribute to the Mg(2+) site. Lys-623 is subject to N6-acetyllysine.

Belongs to the ATP-dependent AMP-binding enzyme family. Mg(2+) serves as cofactor. In terms of processing, acetylated. Deacetylation by the SIR2-homolog deacetylase activates the enzyme.

It carries out the reaction acetate + ATP + CoA = acetyl-CoA + AMP + diphosphate. Catalyzes the conversion of acetate into acetyl-CoA (AcCoA), an essential intermediate at the junction of anabolic and catabolic pathways. AcsA undergoes a two-step reaction. In the first half reaction, AcsA combines acetate with ATP to form acetyl-adenylate (AcAMP) intermediate. In the second half reaction, it can then transfer the acetyl group from AcAMP to the sulfhydryl group of CoA, forming the product AcCoA. The protein is Acetyl-coenzyme A synthetase of Helicobacter pylori (strain HPAG1).